The sequence spans 421 residues: ATP-dependent RNA helicase RhlB (421 aa).

The Q motif signature appears at 9–37 (QKFSDFALHPKVVEALEKKGFHNCTPIQA). Residues 40 to 219 (LPLTLAGRDV…FEQMNNAEYI (180 aa)) form the Helicase ATP-binding domain. 53–60 (AQTGTGKT) is a binding site for ATP. The short motif at 165-168 (DEAD) is the DEAD box element. Residues 245-390 (RLLQTLIEEE…VSKYNPDALM (146 aa)) form the Helicase C-terminal domain. The disordered stretch occupies residues 392 to 421 (DLPKPLRLTRPRTGNGPRRTGAPRNRRRSG). The span at 402–414 (PRTGNGPRRTGAP) shows a compositional bias: low complexity.

The protein belongs to the DEAD box helicase family. RhlB subfamily. Component of the RNA degradosome, which is a multiprotein complex involved in RNA processing and mRNA degradation.

It is found in the cytoplasm. The enzyme catalyses ATP + H2O = ADP + phosphate + H(+). DEAD-box RNA helicase involved in RNA degradation. Has RNA-dependent ATPase activity and unwinds double-stranded RNA. The polypeptide is ATP-dependent RNA helicase RhlB (Escherichia coli O157:H7 (strain EC4115 / EHEC)).